Consider the following 2265-residue polypeptide: Collagen alpha-6(VI) chain (2265 aa).

Residues 1–18 (MLLVLCLTMICFHVCVNQ) form the signal peptide. Residues 19–1390 (DSGPEYADVV…TCCCLLCKCT (1372 aa)) are nonhelical region. 7 VWFA domains span residues 26–205 (DVVF…IKDV), 228–406 (DVVF…LKKL), 435–605 (DIYL…RNQV), 621–790 (DIMF…EDDL), 808–981 (DVVF…FSDV), 999–1170 (DLVF…KKRI), and 1186–1378 (DVVV…INVA). N-linked (GlcNAc...) asparagine glycosylation is found at N197, N238, and N346. Residue N760 is glycosylated (N-linked (GlcNAc...) asparagine). Residues 1391–1724 (GGDGAMGDPG…GRKGVKGARG (334 aa)) are triple-helical region. A disordered region spans residues 1398-1722 (DPGSAGKKGP…PPGRKGVKGA (325 aa)). A compositionally biased stretch (acidic residues) spans 1455–1470 (EEGEVGEDGLDGLDGE). Residues 1497 to 1507 (AAGDRGAKGLR) show a composition bias toward basic and acidic residues. The Cell attachment site motif lies at 1507-1509 (RGD). Residues 1546–1558 (SRRKMVVHGRRGH) show a composition bias toward basic residues. A nonhelical region region spans residues 1725–2265 (LASFSTCDLI…ATSKLGKRSA (541 aa)). 2 consecutive VWFA domains span residues 1756–1936 (ELVF…ERLQ) and 1964–2165 (DTAF…INSI). Residues 2186 to 2205 (SRDLKPPPRQFRSFVPGPQK) are disordered.

This sequence belongs to the type VI collagen family. In terms of assembly, trimers composed of three different chains: alpha-1(VI), alpha-2(VI), and alpha-3(VI) or alpha-4(VI) or alpha-5(VI) or alpha-6(VI). Prolines at the third position of the tripeptide repeating unit (G-X-Y) are hydroxylated in some or all of the chains. In terms of tissue distribution, in newborn, it is expressed in lung, heart, kidney, muscle, brain, intestine, skin, femur and sternum. In adult, it is expressed in lung, heart, muscle, ovary, brain, liver and sternum.

It is found in the secreted. It localises to the extracellular space. Its subcellular location is the extracellular matrix. In terms of biological role, collagen VI acts as a cell-binding protein. The sequence is that of Collagen alpha-6(VI) chain (Col6a6) from Mus musculus (Mouse).